The sequence spans 493 residues: ATP-dependent RNA helicase dbp3 (493 aa).

A disordered region spans residues 1–38 (MTKRDYQNDTTAESRPTKKSKGEKKVKETKEKKEKKVK). Residues 23 to 34 (EKKVKETKEKKE) are compositionally biased toward basic and acidic residues. The short motif at 97–105 (SFKSPTSIQ) is the Q motif element. The Helicase ATP-binding domain maps to 109-285 (WPLLFGGRDV…STFMSSPVTV (177 aa)). Residue 122-129 (AETGSGKT) participates in ATP binding. The short motif at 232–235 (DEAD) is the DEAD box element. A Helicase C-terminal domain is found at 316-462 (RLVQLLKQHQ…EVPEELLKFG (147 aa)).

This sequence belongs to the DEAD box helicase family. DDX5/DBP2 subfamily.

It is found in the nucleus. It localises to the nucleolus. It catalyses the reaction ATP + H2O = ADP + phosphate + H(+). Its function is as follows. ATP-dependent RNA helicase required for 60S ribosomal subunit synthesis. Involved in efficient pre-rRNA processing, predominantly at site A3, which is necessary for the normal formation of 25S and 5.8S rRNAs. This chain is ATP-dependent RNA helicase dbp3 (dbp3), found in Aspergillus terreus (strain NIH 2624 / FGSC A1156).